Consider the following 249-residue polypeptide: 2,3-bisphosphoglycerate-dependent phosphoglycerate mutase (249 aa).

Substrate is bound by residues 8–15, 21–22, arginine 60, 87–90, lysine 98, 114–115, and 183–184; these read RHGESVWN, TG, ERHY, RR, and GN. Histidine 9 (tele-phosphohistidine intermediate) is an active-site residue. Glutamate 87 serves as the catalytic Proton donor/acceptor.

It belongs to the phosphoglycerate mutase family. BPG-dependent PGAM subfamily.

The enzyme catalyses (2R)-2-phosphoglycerate = (2R)-3-phosphoglycerate. It participates in carbohydrate degradation; glycolysis; pyruvate from D-glyceraldehyde 3-phosphate: step 3/5. Functionally, catalyzes the interconversion of 2-phosphoglycerate and 3-phosphoglycerate. This Chloroherpeton thalassium (strain ATCC 35110 / GB-78) protein is 2,3-bisphosphoglycerate-dependent phosphoglycerate mutase.